A 501-amino-acid chain; its full sequence is 2,3-bisphosphoglycerate-independent phosphoglycerate mutase (501 aa).

Mn(2+)-binding residues include aspartate 12 and serine 62. The active-site Phosphoserine intermediate is serine 62. Substrate contacts are provided by residues histidine 121, 150–151 (RD), arginine 182, arginine 188, 253–256 (RSDR), and lysine 322. 5 residues coordinate Mn(2+): aspartate 389, histidine 393, aspartate 430, histidine 431, and histidine 449.

Belongs to the BPG-independent phosphoglycerate mutase family. Monomer. Mn(2+) serves as cofactor.

The catalysed reaction is (2R)-2-phosphoglycerate = (2R)-3-phosphoglycerate. The protein operates within carbohydrate degradation; glycolysis; pyruvate from D-glyceraldehyde 3-phosphate: step 3/5. Functionally, catalyzes the interconversion of 2-phosphoglycerate and 3-phosphoglycerate. The polypeptide is 2,3-bisphosphoglycerate-independent phosphoglycerate mutase (Ehrlichia ruminantium (strain Gardel)).